Consider the following 417-residue polypeptide: Putative competence-damage inducible protein (417 aa).

It belongs to the CinA family.

In Leuconostoc citreum (strain KM20), this protein is Putative competence-damage inducible protein.